A 385-amino-acid polypeptide reads, in one-letter code: Putative RNA methyltransferase YpsC (385 aa).

Positions alanine 44–serine 156 constitute a THUMP domain.

The protein belongs to the methyltransferase superfamily. In terms of assembly, interacts with the RNA polymerase core.

The polypeptide is Putative RNA methyltransferase YpsC (ypsC) (Bacillus subtilis (strain 168)).